We begin with the raw amino-acid sequence, 305 residues long: Ribosomal RNA small subunit methyltransferase H (305 aa).

Residues 33–35 (GGY), Asp51, Phe78, Asp96, and Gln103 each bind S-adenosyl-L-methionine.

Belongs to the methyltransferase superfamily. RsmH family.

It is found in the cytoplasm. The enzyme catalyses cytidine(1402) in 16S rRNA + S-adenosyl-L-methionine = N(4)-methylcytidine(1402) in 16S rRNA + S-adenosyl-L-homocysteine + H(+). Its function is as follows. Specifically methylates the N4 position of cytidine in position 1402 (C1402) of 16S rRNA. The sequence is that of Ribosomal RNA small subunit methyltransferase H from Rickettsia bellii (strain RML369-C).